A 2559-amino-acid chain; its full sequence is Stabilin-2 (2559 aa).

Residues 1–28 (MARSKLLLGKLLPLILIFLGLLVQNACS) form the signal peptide. Topologically, residues 29 to 2464 (PTEAPELTKR…PPTAATAAHS (2436 aa)) are extracellular. A glycan (N-linked (GlcNAc...) asparagine) is linked at N71. EGF-like domains lie at 116 to 156 (DCME…TACE), 164 to 201 (FGPNCSAVCSCVHGVCNSGISGDGTCECLSAYRGPRCD), 203 to 244 (PIPE…QTCK), 245 to 284 (PINPCLKNVCHPHASCSYLGPNRHSCVCQKGYQGDGQVCL), and 330 to 370 (MTDI…LNCY). Intrachain disulfides connect C120-C134, C128-C144, and C146-C155. N167 carries an N-linked (GlcNAc...) asparagine glycan. 12 cysteine pairs are disulfide-bonded: C168/C179, C172/C189, C191/C200, C207/C218, C212/C230, C232/C243, C249/C260, C254/C270, C272/C283, C334/C346, C340/C356, and C358/C369. N345 carries N-linked (GlcNAc...) asparagine glycosylation. FAS1 domains follow at residues 379 to 512 (ELNT…DRAM) and 522 to 659 (NPQQ…TGVL). Residues N572, N626, N673, and N691 are each glycosylated (N-linked (GlcNAc...) asparagine). Positions 743-783 (DCNPCPGGFMNPCSGNGQCIDGLGGNGTCICEDGFQGSRCQ) constitute an EGF-like 6 domain. 3 cysteine pairs are disulfide-bonded: C747–C761, C755–C771, and C773–C782. N-linked (GlcNAc...) asparagine glycosylation occurs at N768. A glycan (N-linked (GlcNAc...) asparagine) is linked at N796. EGF-like domains are found at residues 833–873 (QTSA…TLCS), 874–917 (KKDP…RDCV), 918–960 (EINS…IDCE), and 961–1002 (PIIS…VLCY). Intrachain disulfides connect C837/C850, C844/C859, C861/C872, C878/C893, C887/C903, C905/C916, C922/C936, C930/C946, C948/C959, C965/C978, C972/C988, and C990/C1001. An N-linked (GlcNAc...) asparagine glycan is attached at N854. N933 carries N-linked (GlcNAc...) asparagine glycosylation. 2 consecutive FAS1 domains span residues 1002 to 1135 (YGNV…NKVL) and 1145 to 1273 (LPSL…EKVL). N-linked (GlcNAc...) asparagine glycosylation is found at N1024, N1036, N1108, N1255, and N1283. Residues 1350-1415 (PQCQACPGKG…CSCVHGRCNQ (66 aa)) enclose the Laminin EGF-like 1 domain. 18 disulfides stabilise this stretch: C1355-C1369, C1363-C1379, C1381-C1390, C1402-C1413, C1406-C1423, C1425-C1434, C1443-C1453, C1447-C1463, C1465-C1476, C1482-C1495, C1489-C1505, C1507-C1518, C1524-C1537, C1531-C1547, C1549-C1560, C1566-C1579, C1573-C1589, and C1591-C1602. Residues N1374 and N1386 are each glycosylated (N-linked (GlcNAc...) asparagine). EGF-like domains follow at residues 1439–1477 (TTDNCNGTCHTSANCLLDPDGKASCKCAAGFQGNGTVCT), 1478–1519 (AINA…IVCL), 1520–1561 (EINP…KVCT), and 1562–1603 (LINV…IVCR). N1444 is a glycosylation site (N-linked (GlcNAc...) asparagine). N-linked (GlcNAc...) asparagine glycosylation occurs at N1472. An N-linked (GlcNAc...) asparagine glycan is attached at N1580. FAS1 domains are found at residues 1603–1731 (RGSI…DTLL) and 1747–1888 (VLLN…DCLL). N-linked (GlcNAc...) asparagine glycosylation is present at N1750. Residues 1965-2030 (PDCQACPGGP…GCSEHGQCDE (66 aa)) enclose the Laminin EGF-like 2 domain. 17 disulfide bridges follow: C1970–C1984, C1978–C1994, C1996–C2005, C2017–C2028, C2022–C2038, C2040–C2049, C2059–C2069, C2063–C2075, C2077–C2088, C2094–C2107, C2101–C2116, C2118–C2129, C2135–C2149, C2143–C2159, C2161–C2172, C2228–C2296, and C2252–C2273. N-linked (GlcNAc...) asparagine glycosylation is present at N2001. EGF-like domains lie at 2055-2089 (VIPVCIPACSMHATCMENNTCVCNLNYEGDGITCT), 2090-2130 (VVDF…HSCT), and 2131-2173 (EIDP…RDCE). An N-linked (GlcNAc...) asparagine glycan is attached at N2072. The Link domain maps to 2206–2298 (GVFHLRSPLG…SEMWDVFCYR (93 aa)). N2287, N2303, N2375, N2391, and N2400 each carry an N-linked (GlcNAc...) asparagine glycan. Residues 2318-2452 (NGNLLQVLMS…GVLHIISEPL (135 aa)) enclose the FAS1 7 domain. A helical membrane pass occupies residues 2465-2485 (GLGTGIFCAVVLVTGAIALAA). At 2486-2559 (YSYFRLNQRT…NSDPLGALRS (74 aa)) the chain is on the cytoplasmic side. At S2503 the chain carries Phosphoserine. Residues 2510 to 2520 (LAFGKQQPESI) are interaction with TMSB4X. A disordered region spans residues 2514 to 2559 (KQQPESITNPLYETSTPAAPEPSCDPFTDSGERELENSDPLGALRS). Residues 2516–2530 (QPESITNPLYETSTP) are compositionally biased toward polar residues.

Interacts with heparin, alpha-M/beta-2 integrin (ITGAM and ITGB2), and thymosin beta 4 (TMSB4X). Interacts with GULP1. Associates with clathrin and adapter protein AP-2; in liver sinusoidal endothelial cells (LSECs). Glycosylated. In terms of processing, proteolytically processed to yield a smaller protein. Expressed in endothelial sinuses of liver, lymph nodes, bone marrow, spleen and in specialised structures of eye, heart, brain and kidney. Expression is detected in corneal and lens epithelium, in mesenchymal cells of the heart valves, in the ependymal cells lining the ventricles in the brain, and in the prismatic epithelial cells covering the renal papillae.

The protein resides in the cytoplasm. It localises to the cell membrane. Phosphatidylserine receptor that enhances the engulfment of apoptotic cells. Hyaluronan receptor that binds to and mediates endocytosis of hyaluronic acid (HA). Also acts, in different species, as a primary systemic scavenger receptor for heparin (Hep), chondroitin sulfate (CS), dermatan sulfate (DS), nonglycosaminoglycan (GAG), acetylated low-density lipoprotein (AcLDL), pro-collagen propeptides and advanced glycation end products (AGE). May serve to maintain tissue integrity by supporting extracellular matrix turnover or it may contribute to maintaining fluidity of bodily liquids by resorption of hyaluronan. Counter receptor which plays an important role in lymphocyte recruitment in the hepatic vasculature. Binds to both Gram-positive and Gram-negative bacteria and may play a role in defense against bacterial infection. The proteolytically processed short form also functions as an endocytosis receptor for heparin internalization as well as HA and CS. This is Stabilin-2 from Mus musculus (Mouse).